The chain runs to 927 residues: Autophagy-related protein 13 (927 aa).

Disordered regions lie at residues 1–66, 334–359, 388–559, 628–716, and 786–927; these read MHQQ…PPAD, SLPQQHATSRAPAAEAGSLRDHRSKP, LRSV…AQPG, TESM…TIRE, and QMQL…RRGW. The segment covering 14 to 30 has biased composition (polar residues); that stretch reads PGATTQPNLPSRSNSTR. Composition is skewed to polar residues over residues 393–402, 513–523, and 544–557; these read QPGSDTSSPP, PASTSRYSSSF, and GSSGRQSLASSVAQ. Positions 630-671 are enriched in low complexity; that stretch reads SMTSSVQMQRSSSSSSRQLTSVPGMTAPASVSASSSPGKPLS. The span at 684–716 shows a compositional bias: polar residues; it reads LSENSIIDYSGQGRITSRQGRTSDNTQPGTIRE. Over residues 793 to 803 the composition is skewed to basic and acidic residues; the sequence is STQRPSDRLEP. Residues 850–868 are compositionally biased toward polar residues; the sequence is HKQTPPQSSRGSFNGSLNR. The segment covering 891–901 has biased composition (basic and acidic residues); the sequence is PQGRRSIEEAR.

It belongs to the ATG13 family. Fungi subfamily. As to quaternary structure, hypophosphorylated form interacts with ATG1 to form the ATG1-ATG13 kinase complex. The ATG1-ATG13 complex interacts with the ATG17-ATG29-ATG31 complex through direct interaction with ATG17.

The protein resides in the cytoplasm. It localises to the preautophagosomal structure. Its function is as follows. Activates the ATG1 kinase in a nutritional condition dependent manner through the TOR pathway, leading to autophagy. Involved in ATG9 and ATG23 cycling through the pre-autophagosomal structure. Also involved in cytoplasm to vacuole transport (Cvt) and more specifically in Cvt vesicle formation. Seems to play a role in the switching machinery regulating the conversion between the Cvt pathway and autophagy. Finally, ATG13 is also required for glycogen storage during stationary phase. Autophagy is required for proper vegetative growth, asexual/sexual reproduction, and full virulence. Autophagy is particularly involved in the biosynthesis of deoxynivalenol (DON), an important virulence determinant. In Gibberella zeae (strain ATCC MYA-4620 / CBS 123657 / FGSC 9075 / NRRL 31084 / PH-1) (Wheat head blight fungus), this protein is Autophagy-related protein 13.